The primary structure comprises 101 residues: Cysteine-rich and transmembrane domain-containing protein B (101 aa).

Positions 1–80 (MSQQPPAVGV…PQQQQQQKHS (80 aa)) are disordered. Positions 24-43 (DAYPPPGQPYPQQGYPPPQG) are enriched in pro residues. The segment covering 59-77 (YPEQGYPQQGYPPQQQQQQ) has biased composition (low complexity). Residues 78-95 (KHSPGMLEGCIAALCCYC) traverse the membrane as a helical segment.

This sequence belongs to the CYSTM1 family.

It is found in the membrane. In Arabidopsis thaliana (Mouse-ear cress), this protein is Cysteine-rich and transmembrane domain-containing protein B.